The following is a 681-amino-acid chain: DNA ligase (681 aa).

NAD(+) contacts are provided by residues 45-49 (DFDFD), 94-95 (SL), and Glu120. Residue Lys122 is the N6-AMP-lysine intermediate of the active site. The NAD(+) site is built by Arg143, Glu177, Lys289, and Lys313. Zn(2+) is bound by residues Cys403, Cys406, Cys421, and Cys426. A BRCT domain is found at 593–681 (ADQQPFAGQS…SLKIDFKNLI (89 aa)).

This sequence belongs to the NAD-dependent DNA ligase family. LigA subfamily. Mg(2+) is required as a cofactor. It depends on Mn(2+) as a cofactor.

It catalyses the reaction NAD(+) + (deoxyribonucleotide)n-3'-hydroxyl + 5'-phospho-(deoxyribonucleotide)m = (deoxyribonucleotide)n+m + AMP + beta-nicotinamide D-nucleotide.. Functionally, DNA ligase that catalyzes the formation of phosphodiester linkages between 5'-phosphoryl and 3'-hydroxyl groups in double-stranded DNA using NAD as a coenzyme and as the energy source for the reaction. It is essential for DNA replication and repair of damaged DNA. The chain is DNA ligase from Leptospira interrogans serogroup Icterohaemorrhagiae serovar Lai (strain 56601).